A 100-amino-acid polypeptide reads, in one-letter code: MAKKSLIYREKKRQKLEQKYHLIRRSSKKEISQIPSLSEKWKIHGKLQSPPRNSAPTRLHRRCFSTGRPRANYRDFGLSGHILREMVHACLLPGATRSSW.

This sequence belongs to the universal ribosomal protein uS14 family. Part of the 30S ribosomal subunit.

The protein resides in the plastid. Its subcellular location is the chloroplast. Functionally, binds 16S rRNA, required for the assembly of 30S particles. This chain is Small ribosomal subunit protein uS14c, found in Arabis hirsuta (Hairy rock-cress).